A 296-amino-acid polypeptide reads, in one-letter code: L-fucono-1,5-lactonase (296 aa).

The protein belongs to the metallo-dependent hydrolases superfamily. In terms of assembly, monomer. It depends on Does not require a divalent metal for activity. The purified enzyme contains Zn(2+), but the addition of chelators does not diminish the catalytic activity of the enzyme, indicating that it does not require a divalent cation for substrate turnover. as a cofactor.

It catalyses the reaction L-fucono-1,5-lactone + H2O = L-fuconate + H(+). It carries out the reaction L-fucono-1,4-lactone + H2O = L-fuconate + H(+). The enzyme catalyses D-arabinono-1,4-lactone + H2O = D-arabinonate + H(+). The catalysed reaction is L-xylono-1,4-lactone + H2O = L-xylonate + H(+). It catalyses the reaction L-galactono-1,4-lactone + H2O = L-galactonate + H(+). The protein operates within carbohydrate degradation; L-fucose degradation. Functionally, L-fucono-1,5-lactonase involved in an L-fucose degradation pathway. Catalyzes the hydrolysis of L-fucono-1,5-lactone to L-fuconate. L-fucono-1,5-lactone is the best substrate, but the enzyme can also hydrolyze L-fucono-1,4-lactone, L-galactono-1,4-lactone D-arabinono-1,4-lactone and L-xylono-1,4-lactone. This Burkholderia multivorans (strain ATCC 17616 / 249) protein is L-fucono-1,5-lactonase.